The chain runs to 610 residues: T-cell immunomodulatory protein (610 aa).

Positions 1–32 (MAAGRLPSARAVLAPLFLGLALLSVGPAPARA) are cleaved as a signal peptide. Asn35, Asn123, Asn138, Asn145, Asn150, Asn175, and Asn241 each carry an N-linked (GlcNAc...) asparagine glycan. An FG-GAP 1; atypical repeat occupies 98-135 (LVTSVVPGDYDGDSQMDVLLTYFPQNHTNSELGAVIFW). The stretch at 153 to 183 (FHDQPLIMDFNGDLIPDVFGITNESSQPQIL) is one FG-GAP 2; atypical repeat. Residues 256 to 291 (VVGQSAFADFDGDGHMDHLLPGCEDKDCQKSAIYLM) form an FG-GAP 3; atypical repeat. Residues Asn351, Asn369, and Asn480 are each glycosylated (N-linked (GlcNAc...) asparagine). The helical transmembrane segment at 565-585 (VLLTAVALIGVCIFILAIIAI) threads the bilayer.

The protein belongs to the TIP family. As to quaternary structure, interacts with RUVBL1, RUVBL2 and alpha-tubulin.

The protein resides in the secreted. It localises to the membrane. Modulator of T-cell function. Has a protective effect in graft versus host disease model. This chain is T-cell immunomodulatory protein, found in Mus musculus (Mouse).